Reading from the N-terminus, the 180-residue chain is Putative pre-16S rRNA nuclease (180 aa).

A compositionally biased stretch (basic and acidic residues) spans 1 to 12 (MDAQERSERPDP). Positions 1 to 23 (MDAQERSERPDPATDPGRGRRLG) are disordered.

The protein belongs to the YqgF nuclease family.

Its subcellular location is the cytoplasm. Could be a nuclease involved in processing of the 5'-end of pre-16S rRNA. The chain is Putative pre-16S rRNA nuclease from Nocardia farcinica (strain IFM 10152).